The chain runs to 354 residues: Uroporphyrinogen decarboxylase (354 aa).

Residues 27–31 (RQAGR), Asp-77, Tyr-154, Ser-209, and His-327 contribute to the substrate site.

Belongs to the uroporphyrinogen decarboxylase family. Homodimer.

Its subcellular location is the cytoplasm. It carries out the reaction uroporphyrinogen III + 4 H(+) = coproporphyrinogen III + 4 CO2. Its pathway is porphyrin-containing compound metabolism; protoporphyrin-IX biosynthesis; coproporphyrinogen-III from 5-aminolevulinate: step 4/4. In terms of biological role, catalyzes the decarboxylation of four acetate groups of uroporphyrinogen-III to yield coproporphyrinogen-III. This chain is Uroporphyrinogen decarboxylase, found in Shewanella sp. (strain ANA-3).